The primary structure comprises 223 residues: Endonuclease NucS (223 aa).

The protein belongs to the NucS endonuclease family.

It is found in the cytoplasm. Cleaves both 3' and 5' ssDNA extremities of branched DNA structures. This is Endonuclease NucS from Mycobacterium marinum (strain ATCC BAA-535 / M).